The following is a 227-amino-acid chain: Putative molybdenum transport system permease protein YvgM (227 aa).

The next 5 membrane-spanning stretches (helical) occupy residues valine 17–leucine 37, phenylalanine 57–glycine 77, valine 94–tyrosine 114, valine 142–serine 162, and threonine 201–isoleucine 221. Residues valine 17–isoleucine 221 enclose the ABC transmembrane type-1 domain.

Belongs to the binding-protein-dependent transport system permease family. CysTW subfamily.

It is found in the cell membrane. Could be part of the binding-protein-dependent transport system for molybdenum; probably responsible for the translocation of the substrate across the membrane. This is Putative molybdenum transport system permease protein YvgM (yvgM) from Bacillus subtilis (strain 168).